The primary structure comprises 131 residues: Large ribosomal subunit protein bL21 (131 aa).

Over residues 106 to 116 (TIDDMPKKEAA) the composition is skewed to basic and acidic residues. Positions 106-131 (TIDDMPKKEAAPAKARRSTKKAAAAE) are disordered.

Belongs to the bacterial ribosomal protein bL21 family. Part of the 50S ribosomal subunit. Contacts protein L20.

Functionally, this protein binds to 23S rRNA in the presence of protein L20. The protein is Large ribosomal subunit protein bL21 of Koribacter versatilis (strain Ellin345).